Here is an 860-residue protein sequence, read N- to C-terminus: Alanine--tRNA ligase (860 aa).

Residues histidine 553, histidine 557, cysteine 655, and histidine 659 each coordinate Zn(2+).

Belongs to the class-II aminoacyl-tRNA synthetase family. The cofactor is Zn(2+).

Its subcellular location is the cytoplasm. The enzyme catalyses tRNA(Ala) + L-alanine + ATP = L-alanyl-tRNA(Ala) + AMP + diphosphate. Catalyzes the attachment of alanine to tRNA(Ala) in a two-step reaction: alanine is first activated by ATP to form Ala-AMP and then transferred to the acceptor end of tRNA(Ala). Also edits incorrectly charged Ser-tRNA(Ala) and Gly-tRNA(Ala) via its editing domain. The chain is Alanine--tRNA ligase from Legionella pneumophila (strain Lens).